A 521-amino-acid chain; its full sequence is Bifunctional purine biosynthesis protein PurH (521 aa).

Residues 1-150 (MSEDRKAIKR…KNHPSVAVVT (150 aa)) enclose the MGS-like domain.

This sequence belongs to the PurH family.

The enzyme catalyses (6R)-10-formyltetrahydrofolate + 5-amino-1-(5-phospho-beta-D-ribosyl)imidazole-4-carboxamide = 5-formamido-1-(5-phospho-D-ribosyl)imidazole-4-carboxamide + (6S)-5,6,7,8-tetrahydrofolate. It catalyses the reaction IMP + H2O = 5-formamido-1-(5-phospho-D-ribosyl)imidazole-4-carboxamide. Its pathway is purine metabolism; IMP biosynthesis via de novo pathway; 5-formamido-1-(5-phospho-D-ribosyl)imidazole-4-carboxamide from 5-amino-1-(5-phospho-D-ribosyl)imidazole-4-carboxamide (10-formyl THF route): step 1/1. The protein operates within purine metabolism; IMP biosynthesis via de novo pathway; IMP from 5-formamido-1-(5-phospho-D-ribosyl)imidazole-4-carboxamide: step 1/1. This Corynebacterium efficiens (strain DSM 44549 / YS-314 / AJ 12310 / JCM 11189 / NBRC 100395) protein is Bifunctional purine biosynthesis protein PurH.